Consider the following 211-residue polypeptide: Imidazole glycerol phosphate synthase subunit HisH (211 aa).

One can recognise a Glutamine amidotransferase type-1 domain in the interval Thr-4–Ile-211. Cys-82 (nucleophile) is an active-site residue. Residues His-192 and Glu-194 contribute to the active site.

In terms of assembly, heterodimer of HisH and HisF.

Its subcellular location is the cytoplasm. The enzyme catalyses 5-[(5-phospho-1-deoxy-D-ribulos-1-ylimino)methylamino]-1-(5-phospho-beta-D-ribosyl)imidazole-4-carboxamide + L-glutamine = D-erythro-1-(imidazol-4-yl)glycerol 3-phosphate + 5-amino-1-(5-phospho-beta-D-ribosyl)imidazole-4-carboxamide + L-glutamate + H(+). The catalysed reaction is L-glutamine + H2O = L-glutamate + NH4(+). It functions in the pathway amino-acid biosynthesis; L-histidine biosynthesis; L-histidine from 5-phospho-alpha-D-ribose 1-diphosphate: step 5/9. Functionally, IGPS catalyzes the conversion of PRFAR and glutamine to IGP, AICAR and glutamate. The HisH subunit catalyzes the hydrolysis of glutamine to glutamate and ammonia as part of the synthesis of IGP and AICAR. The resulting ammonia molecule is channeled to the active site of HisF. The polypeptide is Imidazole glycerol phosphate synthase subunit HisH (Corynebacterium efficiens (strain DSM 44549 / YS-314 / AJ 12310 / JCM 11189 / NBRC 100395)).